A 427-amino-acid chain; its full sequence is Inward rectifier potassium channel 2 (427 aa).

Residues 1 to 81 (MGSVRTNRYS…IFTTCVDIRW (81 aa)) lie on the Cytoplasmic side of the membrane. Cys-76 carries the S-nitrosocysteine modification. Residues 82–106 (RWMLVIFCLAFVLSWLFFGCVFWLI) form a helical membrane-spanning segment. The Extracellular segment spans residues 107-128 (ALLHGDLDASKESKACVSEVNS). Residues 129–140 (FTAAFLFSIETQ) constitute an intramembrane region (helical; Pore-forming). An intramembrane region (pore-forming) is located at residues 141-147 (TTIGYGF). The Selectivity filter motif lies at 142-147 (TIGYGF). The Extracellular segment spans residues 148 to 156 (RCVTDECPV). The helical transmembrane segment at 157–178 (AVFMVVFQSIVGCIIDAFIIGA) threads the bilayer. At 179–427 (VMAKMAKPKK…PRPLRRESEI (249 aa)) the chain is on the cytoplasmic side. The interval 181 to 208 (AKMAKPKKRNETLVFSHNAVIAMRDGKL) is polyphosphoinositide (PIP2)-binding. Residues 384 to 427 (SKEEDDSENGVPESTSTDTPPDIDLHNQASVPLEPRPLRRESEI) are disordered. A PDZ-binding motif is present at residues 425-427 (SEI).

Belongs to the inward rectifier-type potassium channel (TC 1.A.2.1) family. KCNJ2 subfamily. In terms of assembly, homotetramer. Homomultimeric and heteromultimeric association with KCNJ4/Kir2.3. Can form heteromeric channels with Kir2.6/KCNJ18. Associates, via its PDZ-recognition domain, with a complex containing LIN7A, LIN7B, LIN7C, DLG1, CASK and APBA1. S-nitrosylation increases the open probability and inward rectifying currents.

The protein resides in the cell membrane. It localises to the sarcolemma. The protein localises to the T-tubule. The catalysed reaction is K(+)(in) = K(+)(out). Its activity is regulated as follows. Activated by phosphatidylinositol 4,5 biphosphate (PtdIns(4,5)P2). In terms of biological role, inward rectifier potassium channels are characterized by a greater tendency to allow potassium to flow into the cell rather than out of it. Their voltage dependence is regulated by the concentration of extracellular potassium; as external potassium is raised, the voltage range of the channel opening shifts to more positive voltages. The inward rectification is mainly due to the blockage of outward current by internal magnesium. Can be blocked by extracellular barium and cesium. Probably participates in establishing action potential waveform and excitability of neuronal and muscle tissues. This chain is Inward rectifier potassium channel 2 (KCNJ2), found in Bos taurus (Bovine).